Consider the following 116-residue polypeptide: Ig heavy chain V region 441 (116 aa).

A signal peptide spans Met-1–Cys-18. Residues Glu-19–Arg-116 form the Ig-like domain.

The sequence is that of Ig heavy chain V region 441 from Mus musculus (Mouse).